Reading from the N-terminus, the 207-residue chain is Guanylate kinase (207 aa).

The 180-residue stretch at 6–185 (GLLIVLSGPS…AKNRIQCIVE (180 aa)) folds into the Guanylate kinase-like domain. 13-20 (GPSGVGKG) contributes to the ATP binding site.

The protein belongs to the guanylate kinase family.

The protein localises to the cytoplasm. The enzyme catalyses GMP + ATP = GDP + ADP. In terms of biological role, essential for recycling GMP and indirectly, cGMP. This chain is Guanylate kinase, found in Staphylococcus aureus (strain Mu50 / ATCC 700699).